Here is a 575-residue protein sequence, read N- to C-terminus: Potassium-transporting ATPase potassium-binding subunit (575 aa).

Helical transmembrane passes span 3–23 (FEGVLQIVATLVLMVAIVPFF), 69–89 (AVLASNAAMFVPVFAVLLLQG), 136–156 (CFQFLMFTSAATGLAVGIAFI), 178–198 (ILMPISIAFAVVLLSQGVPQS), 266–286 (LLEILLLLAVPTSLIYTFGVL), 293–313 (GWVLFGTIFVLFVGLVGVAAL), 340–360 (FGWAQSALFATATTGTMTGAV), 367–387 (LTPLAGLVTLFNLCLQVIWGG), 391–411 (GIAYILVFLIIAVFLTGLMVG), 431–451 (IIFLVHPVIILVPTAIALAIP), 498–518 (VVLLLGRYAPIVALLALAGGL), and 543–563 (AGTILILGALTFFPVFALGPI).

It belongs to the KdpA family. As to quaternary structure, the system is composed of three essential subunits: KdpA, KdpB and KdpC.

It localises to the cell inner membrane. In terms of biological role, part of the high-affinity ATP-driven potassium transport (or Kdp) system, which catalyzes the hydrolysis of ATP coupled with the electrogenic transport of potassium into the cytoplasm. This subunit binds the periplasmic potassium ions and delivers the ions to the membrane domain of KdpB through an intramembrane tunnel. In Gloeobacter violaceus (strain ATCC 29082 / PCC 7421), this protein is Potassium-transporting ATPase potassium-binding subunit.